Here is a 307-residue protein sequence, read N- to C-terminus: Protoheme IX farnesyltransferase (307 aa).

8 helical membrane-spanning segments follow: residues 32-52, 65-85, 108-128, 131-151, 158-178, 186-206, 251-271, and 287-307; these read MGIV…ALHF, FFTI…NNYI, PGFA…FLLL, PMAV…YSLW, LNTV…WAAI, IAWM…LALA, LGIT…VLGF, and FVYS…VTFF.

This sequence belongs to the UbiA prenyltransferase family. Protoheme IX farnesyltransferase subfamily. As to quaternary structure, interacts with CtaA.

It localises to the cell membrane. The catalysed reaction is heme b + (2E,6E)-farnesyl diphosphate + H2O = Fe(II)-heme o + diphosphate. Its pathway is porphyrin-containing compound metabolism; heme O biosynthesis; heme O from protoheme: step 1/1. Functionally, converts heme B (protoheme IX) to heme O by substitution of the vinyl group on carbon 2 of heme B porphyrin ring with a hydroxyethyl farnesyl side group. The protein is Protoheme IX farnesyltransferase of Bacillus anthracis (strain A0248).